A 375-amino-acid chain; its full sequence is Queuine tRNA-ribosyltransferase (375 aa).

The active-site Proton acceptor is D89. Residues 89 to 93 (DSGGF), D143, Q185, and G212 each bind substrate. Residues 243-249 (GVGKPED) are RNA binding. Residue D262 is the Nucleophile of the active site. The tract at residues 267–271 (TRNAR) is RNA binding; important for wobble base 34 recognition. The Zn(2+) site is built by C300, C302, C305, and H331.

This sequence belongs to the queuine tRNA-ribosyltransferase family. In terms of assembly, homodimer. Within each dimer, one monomer is responsible for RNA recognition and catalysis, while the other monomer binds to the replacement base PreQ1. Zn(2+) serves as cofactor.

The catalysed reaction is 7-aminomethyl-7-carbaguanine + guanosine(34) in tRNA = 7-aminomethyl-7-carbaguanosine(34) in tRNA + guanine. The protein operates within tRNA modification; tRNA-queuosine biosynthesis. Catalyzes the base-exchange of a guanine (G) residue with the queuine precursor 7-aminomethyl-7-deazaguanine (PreQ1) at position 34 (anticodon wobble position) in tRNAs with GU(N) anticodons (tRNA-Asp, -Asn, -His and -Tyr). Catalysis occurs through a double-displacement mechanism. The nucleophile active site attacks the C1' of nucleotide 34 to detach the guanine base from the RNA, forming a covalent enzyme-RNA intermediate. The proton acceptor active site deprotonates the incoming PreQ1, allowing a nucleophilic attack on the C1' of the ribose to form the product. After dissociation, two additional enzymatic reactions on the tRNA convert PreQ1 to queuine (Q), resulting in the hypermodified nucleoside queuosine (7-(((4,5-cis-dihydroxy-2-cyclopenten-1-yl)amino)methyl)-7-deazaguanosine). The polypeptide is Queuine tRNA-ribosyltransferase (Pseudoalteromonas translucida (strain TAC 125)).